The following is a 34-amino-acid chain: Potassium channel toxin alpha-KTx 6.13 (34 aa).

4 disulfide bridges follow: Cys-3–Cys-24, Cys-9–Cys-29, Cys-13–Cys-31, and Cys-19–Cys-34. Cysteine amide is present on Cys-34.

The protein belongs to the short scorpion toxin superfamily. Potassium channel inhibitor family. Alpha-KTx 06 subfamily. In terms of tissue distribution, expressed by the venom gland.

It localises to the secreted. Its function is as follows. Antagonist of Kv1/KCNA potassium channels. Shows a weak interaction with muscle-type nicotinic acetylcholine receptors (nAChR), since it inhibits alpha-bungarotoxin binding to both muscle-type nAChR from T.californica (IC(50)=490 nM). This suggests it probably weakly inhibits nAChR. The chain is Potassium channel toxin alpha-KTx 6.13 from Heterometrus spinifer (Asia giant forest scorpion).